The primary structure comprises 198 residues: Probable GTP-binding protein EngB (198 aa).

The region spanning 22 to 195 (DLPEIALAGR…WKAIHKFTKT (174 aa)) is the EngB-type G domain. GTP-binding positions include 30-37 (GRSNVGKS), 57-61 (GKTQT), 75-78 (DVPG), 142-145 (TKAD), and 174-176 (FSS). Mg(2+) contacts are provided by Ser-37 and Thr-59.

It belongs to the TRAFAC class TrmE-Era-EngA-EngB-Septin-like GTPase superfamily. EngB GTPase family. Mg(2+) is required as a cofactor.

In terms of biological role, necessary for normal cell division and for the maintenance of normal septation. The protein is Probable GTP-binding protein EngB of Bacillus cytotoxicus (strain DSM 22905 / CIP 110041 / 391-98 / NVH 391-98).